A 349-amino-acid chain; its full sequence is Phosphoribosylformylglycinamidine cyclo-ligase (349 aa).

The protein belongs to the AIR synthase family.

The protein localises to the cytoplasm. The enzyme catalyses 2-formamido-N(1)-(5-O-phospho-beta-D-ribosyl)acetamidine + ATP = 5-amino-1-(5-phospho-beta-D-ribosyl)imidazole + ADP + phosphate + H(+). It participates in purine metabolism; IMP biosynthesis via de novo pathway; 5-amino-1-(5-phospho-D-ribosyl)imidazole from N(2)-formyl-N(1)-(5-phospho-D-ribosyl)glycinamide: step 2/2. This Bordetella parapertussis (strain 12822 / ATCC BAA-587 / NCTC 13253) protein is Phosphoribosylformylglycinamidine cyclo-ligase.